A 102-amino-acid polypeptide reads, in one-letter code: UPF0235 protein msl4154 (102 aa).

The protein belongs to the UPF0235 family.

The sequence is that of UPF0235 protein msl4154 from Mesorhizobium japonicum (strain LMG 29417 / CECT 9101 / MAFF 303099) (Mesorhizobium loti (strain MAFF 303099)).